Consider the following 234-residue polypeptide: BTB/POZ domain-containing protein KCTD5 (234 aa).

Position 2 is an N-acetylalanine (A2). At S10 the chain carries Phosphoserine. Residues 44–146 enclose the BTB domain; the sequence is KWVRLNVGGT…LVKDKIRERD (103 aa). The segment at 213–234 is disordered; sequence PYGTASEPSEKAKILQERGSRM. Residues 220 to 234 show a composition bias toward basic and acidic residues; that stretch reads PSEKAKILQERGSRM.

As to quaternary structure, homopentamer. Interacts (via C-terminus) with GRASP55/GORASP2. Interacts with CUL3 and with ubiquitinated proteins. Interacts with CRY1. In terms of assembly, (Microbial infection) Interacts with adeno-associated virus 2 (AAV-2) REP proteins.

Its subcellular location is the cytoplasm. It localises to the cytosol. The protein resides in the nucleus. In terms of biological role, its interaction with CUL3 suggests that it may act as a substrate adapter in some E3 ligase complex. Does not affect the function of Kv channel Kv2.1/KCNB1, Kv1.2/KCNA2, Kv4.2/KCND2 and Kv3.4/KCNC4. In Homo sapiens (Human), this protein is BTB/POZ domain-containing protein KCTD5 (KCTD5).